Consider the following 524-residue polypeptide: Probable cytochrome P450 519C1 (524 aa).

A helical transmembrane segment spans residues 1-21; the sequence is MNILLLIFYFLVCFLIFDFIK. Cys470 is a binding site for heme.

It belongs to the cytochrome P450 family. It depends on heme as a cofactor.

The protein resides in the membrane. In Dictyostelium discoideum (Social amoeba), this protein is Probable cytochrome P450 519C1 (cyp519C1).